The sequence spans 139 residues: Large ribosomal subunit protein uL16 (139 aa).

The protein belongs to the universal ribosomal protein uL16 family. As to quaternary structure, part of the 50S ribosomal subunit.

Functionally, binds 23S rRNA and is also seen to make contacts with the A and possibly P site tRNAs. The protein is Large ribosomal subunit protein uL16 of Picosynechococcus sp. (strain ATCC 27264 / PCC 7002 / PR-6) (Agmenellum quadruplicatum).